The primary structure comprises 188 residues: UPF0398 protein ABC2016 (188 aa).

Belongs to the UPF0398 family.

This is UPF0398 protein ABC2016 from Shouchella clausii (strain KSM-K16) (Alkalihalobacillus clausii).